Here is a 127-residue protein sequence, read N- to C-terminus: Large ribosomal subunit protein uL22 (127 aa).

It belongs to the universal ribosomal protein uL22 family. Part of the 50S ribosomal subunit.

This protein binds specifically to 23S rRNA; its binding is stimulated by other ribosomal proteins, e.g. L4, L17, and L20. It is important during the early stages of 50S assembly. It makes multiple contacts with different domains of the 23S rRNA in the assembled 50S subunit and ribosome. In terms of biological role, the globular domain of the protein is located near the polypeptide exit tunnel on the outside of the subunit, while an extended beta-hairpin is found that lines the wall of the exit tunnel in the center of the 70S ribosome. This is Large ribosomal subunit protein uL22 from Methylorubrum extorquens (strain CM4 / NCIMB 13688) (Methylobacterium extorquens).